The following is a 566-amino-acid chain: E3 ubiquitin-protein ligase RNF220 (566 aa).

Lys-277 is covalently cross-linked (Glycyl lysine isopeptide (Lys-Gly) (interchain with G-Cter in SUMO2)). The interval 277–297 is disordered; the sequence is KREGESPTASPHSSATDDLHH. Ser-390 is modified (phosphoserine). Residues 485–513 adopt a coiled-coil conformation; sequence EDSAVTTFEALKARVRELERQLSRGDRYK. The required for targeting to the cytoplasm stretch occupies residues 514-522; that stretch reads CLICMDSYS. The RING-type zinc finger occupies 514–553; that stretch reads CLICMDSYSMPLTSIQCWHVHCEECWLRTLGAKKLCPQCN.

As to quaternary structure, interacts with SIN3B. Interacts with CTNNB1 (via Armadillo repeats 2-8). Interacts with USP7 (via MATH domain). Post-translationally, auto-ubiquitinated; leads to proteasomal degradation.

The protein localises to the cytoplasm. It is found in the nucleus. The catalysed reaction is S-ubiquitinyl-[E2 ubiquitin-conjugating enzyme]-L-cysteine + [acceptor protein]-L-lysine = [E2 ubiquitin-conjugating enzyme]-L-cysteine + N(6)-ubiquitinyl-[acceptor protein]-L-lysine.. It participates in protein modification; protein ubiquitination. In terms of biological role, E3 ubiquitin-protein ligase that promotes the ubiquitination and proteasomal degradation of SIN3B. Independently of its E3 ligase activity, acts as a CTNNB1 stabilizer through USP7-mediated deubiquitination of CTNNB1 and promotes Wnt signaling. Plays a critical role in the regulation of nuclear lamina. The sequence is that of E3 ubiquitin-protein ligase RNF220 (RNF220) from Macaca fascicularis (Crab-eating macaque).